Here is a 329-residue protein sequence, read N- to C-terminus: Minor capsid protein A1 (329 aa).

It is found in the virion. Minor capsid protein. This Escherichia coli (Bacteriophage Q-beta) protein is Minor capsid protein A1.